Consider the following 359-residue polypeptide: MSIASTQADKKSSNHPNKIKVSGVILVDKPQGMTSQQVVSKVKYLFKSPNHDSKKAGHTGTLDPMATGLLPICLGEATKFSHYQLDADKSYQATILLGSQTDTGDADGQVTAEAPIPAFDDALLDKVAQQFLGAQQQIPPMYSALKKDGKKLYEYARAGIEVDRPPRDIVLKAIELKAIDEQQIQLTVTCSKGTYVRVLAEDIAKAMGTLGHLTALRRLQVGDFKIDETIALADLEALPLEQRQTYLLPVDACIDISAELSLSSEQCERVQMGQRLNVIDQLTDDVQSYITTAIDQHLAANNNSAADSQNIEDTNDDNEQQLVHEIPIDIRLIDEQGAFIGLGAVSLNGRLQPKKLIQL.

The active-site Nucleophile is Asp-63.

The protein belongs to the pseudouridine synthase TruB family. Type 1 subfamily.

The enzyme catalyses uridine(55) in tRNA = pseudouridine(55) in tRNA. Functionally, responsible for synthesis of pseudouridine from uracil-55 in the psi GC loop of transfer RNAs. This is tRNA pseudouridine synthase B from Psychrobacter cryohalolentis (strain ATCC BAA-1226 / DSM 17306 / VKM B-2378 / K5).